The primary structure comprises 58 residues: Small ribosomal subunit protein bS21 (58 aa).

Positions 36–58 (EHYEKPSVKRKKKSEAARKRKFK) are disordered. A compositionally biased stretch (basic residues) spans 43-58 (VKRKKKSEAARKRKFK).

This sequence belongs to the bacterial ribosomal protein bS21 family.

This Clostridium kluyveri (strain NBRC 12016) protein is Small ribosomal subunit protein bS21.